The chain runs to 272 residues: Acyl-[acyl-carrier-protein]--UDP-N-acetylglucosamine O-acyltransferase (272 aa).

Belongs to the transferase hexapeptide repeat family. LpxA subfamily. Homotrimer.

It is found in the cytoplasm. The enzyme catalyses a (3R)-hydroxyacyl-[ACP] + UDP-N-acetyl-alpha-D-glucosamine = a UDP-3-O-[(3R)-3-hydroxyacyl]-N-acetyl-alpha-D-glucosamine + holo-[ACP]. The protein operates within glycolipid biosynthesis; lipid IV(A) biosynthesis; lipid IV(A) from (3R)-3-hydroxytetradecanoyl-[acyl-carrier-protein] and UDP-N-acetyl-alpha-D-glucosamine: step 1/6. In terms of biological role, involved in the biosynthesis of lipid A, a phosphorylated glycolipid that anchors the lipopolysaccharide to the outer membrane of the cell. The protein is Acyl-[acyl-carrier-protein]--UDP-N-acetylglucosamine O-acyltransferase of Rhizobium etli (strain ATCC 51251 / DSM 11541 / JCM 21823 / NBRC 15573 / CFN 42).